Here is a 318-residue protein sequence, read N- to C-terminus: GTP cyclohydrolase MptA (318 aa).

It belongs to the GTP cyclohydrolase IV family. In terms of assembly, homodimer. Requires Fe(2+) as cofactor.

The catalysed reaction is GTP + H2O = 7,8-dihydroneopterin 2',3'-cyclic phosphate + formate + diphosphate + H(+). The protein operates within cofactor biosynthesis; 5,6,7,8-tetrahydromethanopterin biosynthesis. Its function is as follows. Converts GTP to 7,8-dihydro-D-neopterin 2',3'-cyclic phosphate, the first intermediate in the biosynthesis of coenzyme methanopterin. The chain is GTP cyclohydrolase MptA from Methanosarcina mazei (strain ATCC BAA-159 / DSM 3647 / Goe1 / Go1 / JCM 11833 / OCM 88) (Methanosarcina frisia).